Consider the following 65-residue polypeptide: Large ribosomal subunit protein bL35 (65 aa).

It belongs to the bacterial ribosomal protein bL35 family.

The chain is Large ribosomal subunit protein bL35 from Borrelia turicatae (strain 91E135).